We begin with the raw amino-acid sequence, 562 residues long: Lamassu protein LmuB (562 aa).

Component of antiviral defense system Lamassu type I, composed of LmuA and LmuB. Expression of Lamassu type I in B.subtilis (strain BEST7003) confers resistance to phages phi3T, SpBeta and SPR. May be an ATPase. The sequence is that of Lamassu protein LmuB from Bacillus sp. (strain NCIM 5461 / CCTCC AB 2011126 / NIO-1130).